Consider the following 640-residue polypeptide: LRR receptor kinase SERL2 (640 aa).

An N-terminal signal peptide occupies residues 1–22; that stretch reads MEPPFFLLLLLLVVSSSSPSAA. Over 23–241 the chain is Extracellular; the sequence is LLSAKGVNNE…AARDRGHKFA (219 aa). 2 N-linked (GlcNAc...) asparagine glycosylation sites follow: Asn94 and Asn107. LRR repeat units follow at residues 95-119, 120-143, 145-167, and 168-191; these read LTNLETVLLQNNNITGPIPAEIGRL, ENLKTLDLSSNSFYGEIPSSVGHL, SLQYLRLNNNTLSGPFPSASANL, and SHLVFLDLSYNNLSGPIPESLART. Asn153, Asn166, Asn179, and Asn222 each carry an N-linked (GlcNAc...) asparagine glycan. A helical transmembrane segment spans residues 242–262; that stretch reads VAFGSTAGCMGLLLLAAGFLF. Over 263-640 the chain is Cytoplasmic; sequence WWRHRRNRQI…VQAVELSGPR (378 aa). One can recognise a Protein kinase domain in the interval 304-583; it reads FSGKNILGKG…EGDGLADRWE (280 aa). Residues 310–318 and Lys332 contribute to the ATP site; that span reads LGKGGFGNV. The Proton acceptor role is filled by Asp427.

Belongs to the protein kinase superfamily. Ser/Thr protein kinase family. As to quaternary structure, interacts with MSBP1.

It localises to the cell membrane. The enzyme catalyses L-seryl-[protein] + ATP = O-phospho-L-seryl-[protein] + ADP + H(+). It catalyses the reaction L-threonyl-[protein] + ATP = O-phospho-L-threonyl-[protein] + ADP + H(+). In terms of biological role, LRR receptor kinase that may be involved in defense response. The sequence is that of LRR receptor kinase SERL2 from Oryza sativa subsp. japonica (Rice).